Reading from the N-terminus, the 439-residue chain is Serine/threonine-protein kinase 2 (439 aa).

Residues 87-439 (NDDFYHISTG…IFSDWINGGN (353 aa)) form the Protein kinase domain. ATP is bound by residues 93-101 (ISTGGYGIV) and K117. D307 acts as the Proton acceptor in catalysis.

This sequence belongs to the protein kinase superfamily. Ser/Thr protein kinase family. Poxviruses subfamily. Phosphorylated in vivo. Autophosphorylated in vitro.

It localises to the host endoplasmic reticulum. Its subcellular location is the host endoplasmic reticulum-Golgi intermediate compartment. It catalyses the reaction L-seryl-[protein] + ATP = O-phospho-L-seryl-[protein] + ADP + H(+). The catalysed reaction is L-threonyl-[protein] + ATP = O-phospho-L-threonyl-[protein] + ADP + H(+). Its function is as follows. Essential serine-protein kinase involved in the early stage of virion morphogenesis. This chain is Serine/threonine-protein kinase 2 (OPG054), found in Vaccinia virus (strain Ankara) (VACV).